A 706-amino-acid polypeptide reads, in one-letter code: Zinc transporter foi (706 aa).

A signal peptide spans 1 to 21; it reads MARHIMAVCVVCLLCAHRLHC. Over 22–261 the chain is Extracellular; it reads QDHIESLLGP…EKDKDIFYVW (240 aa). Residues 40–56 show a composition bias toward polar residues; sequence QDQLNARVYTNLSPSSE. The tract at residues 40–101 is disordered; the sequence is QDQLNARVYT…HGPTSESRVP (62 aa). 6 N-linked (GlcNAc...) asparagine glycosylation sites follow: Asn74, Asn119, Asn176, Asn182, Asn196, and Asn207. The chain crosses the membrane as a helical span at residues 262–282; the sequence is IYAFISVFACGILGLVGVAII. Residues 283–292 are Cytoplasmic-facing; the sequence is PFMGSRYYKY. A helical transmembrane segment spans residues 293–313; the sequence is IIQYLVALAVGTMTGDALLHL. Topologically, residues 314–329 are extracellular; sequence LPHSLAGQDERGMIMK. The helical transmembrane segment at 330–350 threads the bilayer; that stretch reads GLGCLGGIIFFYVMEHALTMI. Topologically, residues 351-604 are cytoplasmic; the sequence is SEWRKSVEKK…LIKAGMSVKS (254 aa). Ser376, Ser377, and Ser381 each carry phosphoserine. The chain crosses the membrane as a helical span at residues 605–625; it reads AVYYNLLTGVLSFIGMIFGIA. The Extracellular portion of the chain corresponds to 626–631; sequence FGQSQD. A helical transmembrane segment spans residues 632–652; sequence VAQWMFAVAAGLFIYIALVDM. Topologically, residues 653–665 are cytoplasmic; the sequence is MPEISASHKSLGQ. A helical transmembrane segment spans residues 666–686; it reads FLLQILGMLSGVGIMLLIALY. Topologically, residues 687 to 706 are extracellular; that stretch reads EGDLMSAFGTAGAASHQHAH.

It belongs to the ZIP transporter (TC 2.A.5) family. Post-translationally, glycosylated. Maternal foi has almost completely disappeared by embryonic stage 3 except in the pole cells. In stage 6 embryos, expression is enriched in the invaginating mesoderm. In stage 9 embryos, high levels in the anterior and posterior midgut primordia. In stage 14 embryos, broad expression with low levels in the epidermis.

The protein resides in the cell membrane. Functionally, required for the normal migration of longitudinal and peripheral glial cells. During larval development, required for the migration of the subretinal glia into the eye disk. During embryonic development, also controls the migration of muscle cells toward their attachment sites. Required in the mesoderm for the correct morphogenesis of embryonic gonad and for tracheal branch fusion during tracheal development. Shg may be cooperating with foi to mediate a common mechanism for gonad and tracheal morphogenesis. Acts as a zinc transporter in both yeast and mammalian cells. The protein is Zinc transporter foi of Drosophila melanogaster (Fruit fly).